A 242-amino-acid chain; its full sequence is Pyridoxine 5'-phosphate synthase (242 aa).

N6 serves as a coordination point for 3-amino-2-oxopropyl phosphate. A 1-deoxy-D-xylulose 5-phosphate-binding site is contributed by 8–9 (DH). A 3-amino-2-oxopropyl phosphate-binding site is contributed by R17. Residue H42 is the Proton acceptor of the active site. 1-deoxy-D-xylulose 5-phosphate contacts are provided by R44 and H49. Residue E69 is the Proton acceptor of the active site. 1-deoxy-D-xylulose 5-phosphate is bound at residue T99. Residue H190 is the Proton donor of the active site. Residues G191 and 212-213 (GH) each bind 3-amino-2-oxopropyl phosphate.

It belongs to the PNP synthase family. As to quaternary structure, homooctamer; tetramer of dimers.

The protein localises to the cytoplasm. It carries out the reaction 3-amino-2-oxopropyl phosphate + 1-deoxy-D-xylulose 5-phosphate = pyridoxine 5'-phosphate + phosphate + 2 H2O + H(+). It participates in cofactor biosynthesis; pyridoxine 5'-phosphate biosynthesis; pyridoxine 5'-phosphate from D-erythrose 4-phosphate: step 5/5. Catalyzes the complicated ring closure reaction between the two acyclic compounds 1-deoxy-D-xylulose-5-phosphate (DXP) and 3-amino-2-oxopropyl phosphate (1-amino-acetone-3-phosphate or AAP) to form pyridoxine 5'-phosphate (PNP) and inorganic phosphate. The chain is Pyridoxine 5'-phosphate synthase from Neisseria meningitidis serogroup A / serotype 4A (strain DSM 15465 / Z2491).